A 189-amino-acid chain; its full sequence is Elongation factor P (189 aa).

N6-(3,6-diaminohexanoyl)-5-hydroxylysine is present on Lys34.

Belongs to the elongation factor P family. In terms of processing, may be beta-lysylated on the epsilon-amino group of Lys-34 by the combined action of EpmA and EpmB, and then hydroxylated on the C5 position of the same residue by EpmC (if this protein is present). Lysylation is critical for the stimulatory effect of EF-P on peptide-bond formation. The lysylation moiety may extend toward the peptidyltransferase center and stabilize the terminal 3-CCA end of the tRNA. Hydroxylation of the C5 position on Lys-34 may allow additional potential stabilizing hydrogen-bond interactions with the P-tRNA.

The protein resides in the cytoplasm. The protein operates within protein biosynthesis; polypeptide chain elongation. Its function is as follows. Involved in peptide bond synthesis. Alleviates ribosome stalling that occurs when 3 or more consecutive Pro residues or the sequence PPG is present in a protein, possibly by augmenting the peptidyl transferase activity of the ribosome. Modification of Lys-34 is required for alleviation. This Teredinibacter turnerae (strain ATCC 39867 / T7901) protein is Elongation factor P.